The primary structure comprises 556 residues: 2-succinyl-5-enolpyruvyl-6-hydroxy-3-cyclohexene-1-carboxylate synthase (556 aa).

This sequence belongs to the TPP enzyme family. MenD subfamily. Homodimer. Mg(2+) serves as cofactor. The cofactor is Mn(2+). It depends on thiamine diphosphate as a cofactor.

The catalysed reaction is isochorismate + 2-oxoglutarate + H(+) = 5-enolpyruvoyl-6-hydroxy-2-succinyl-cyclohex-3-ene-1-carboxylate + CO2. It functions in the pathway quinol/quinone metabolism; 1,4-dihydroxy-2-naphthoate biosynthesis; 1,4-dihydroxy-2-naphthoate from chorismate: step 2/7. Its pathway is quinol/quinone metabolism; menaquinone biosynthesis. Its function is as follows. Catalyzes the thiamine diphosphate-dependent decarboxylation of 2-oxoglutarate and the subsequent addition of the resulting succinic semialdehyde-thiamine pyrophosphate anion to isochorismate to yield 2-succinyl-5-enolpyruvyl-6-hydroxy-3-cyclohexene-1-carboxylate (SEPHCHC). The sequence is that of 2-succinyl-5-enolpyruvyl-6-hydroxy-3-cyclohexene-1-carboxylate synthase from Staphylococcus epidermidis (strain ATCC 35984 / DSM 28319 / BCRC 17069 / CCUG 31568 / BM 3577 / RP62A).